Reading from the N-terminus, the 94-residue chain is Co-chaperonin GroES (94 aa).

Belongs to the GroES chaperonin family. In terms of assembly, heptamer of 7 subunits arranged in a ring. Interacts with the chaperonin GroEL.

The protein localises to the cytoplasm. Together with the chaperonin GroEL, plays an essential role in assisting protein folding. The GroEL-GroES system forms a nano-cage that allows encapsulation of the non-native substrate proteins and provides a physical environment optimized to promote and accelerate protein folding. GroES binds to the apical surface of the GroEL ring, thereby capping the opening of the GroEL channel. This chain is Co-chaperonin GroES, found in Clostridioides difficile (strain 630) (Peptoclostridium difficile).